Consider the following 218-residue polypeptide: Ribose-5-phosphate isomerase A (218 aa).

Substrate-binding positions include 28-31 (TGST), 81-84 (DGAD), and 94-97 (KGGG). Glutamate 103 acts as the Proton acceptor in catalysis. Lysine 121 provides a ligand contact to substrate.

It belongs to the ribose 5-phosphate isomerase family. Homodimer.

The enzyme catalyses aldehydo-D-ribose 5-phosphate = D-ribulose 5-phosphate. It participates in carbohydrate degradation; pentose phosphate pathway; D-ribose 5-phosphate from D-ribulose 5-phosphate (non-oxidative stage): step 1/1. Functionally, catalyzes the reversible conversion of ribose-5-phosphate to ribulose 5-phosphate. The sequence is that of Ribose-5-phosphate isomerase A from Vibrio vulnificus (strain CMCP6).